Here is a 750-residue protein sequence, read N- to C-terminus: Photosystem I P700 chlorophyll a apoprotein A1 (750 aa).

Transmembrane regions (helical) follow at residues V70–A93, L156–H179, L195–L219, I291–Y309, W346–Y369, L385–V411, A433–H455, and F531–L549. Residues C573 and C582 each contribute to the [4Fe-4S] cluster site. 2 helical membrane passes run H589–W610 and L664–F686. Residue H675 coordinates chlorophyll a'. The chlorophyll a site is built by M683 and Y691. W692 is a binding site for phylloquinone. The chain crosses the membrane as a helical span at residues A724 to A744.

This sequence belongs to the PsaA/PsaB family. The PsaA/B heterodimer binds the P700 chlorophyll special pair and subsequent electron acceptors. PSI consists of a core antenna complex that captures photons, and an electron transfer chain that converts photonic excitation into a charge separation. The eukaryotic PSI reaction center is composed of at least 11 subunits. P700 is a chlorophyll a/chlorophyll a' dimer, A0 is one or more chlorophyll a, A1 is one or both phylloquinones and FX is a shared 4Fe-4S iron-sulfur center. serves as cofactor.

The protein resides in the plastid. The protein localises to the chloroplast thylakoid membrane. It carries out the reaction reduced [plastocyanin] + hnu + oxidized [2Fe-2S]-[ferredoxin] = oxidized [plastocyanin] + reduced [2Fe-2S]-[ferredoxin]. PsaA and PsaB bind P700, the primary electron donor of photosystem I (PSI), as well as the electron acceptors A0, A1 and FX. PSI is a plastocyanin-ferredoxin oxidoreductase, converting photonic excitation into a charge separation, which transfers an electron from the donor P700 chlorophyll pair to the spectroscopically characterized acceptors A0, A1, FX, FA and FB in turn. Oxidized P700 is reduced on the lumenal side of the thylakoid membrane by plastocyanin. The chain is Photosystem I P700 chlorophyll a apoprotein A1 from Acorus calamus (Sweet flag).